The following is a 171-amino-acid chain: Ribosome maturation factor RimM (171 aa).

The PRC barrel domain maps to 97–170 (EGEYYYHEII…LVTIHVMEGL (74 aa)).

Belongs to the RimM family. In terms of assembly, binds ribosomal protein uS19.

Its subcellular location is the cytoplasm. Functionally, an accessory protein needed during the final step in the assembly of 30S ribosomal subunit, possibly for assembly of the head region. Essential for efficient processing of 16S rRNA. May be needed both before and after RbfA during the maturation of 16S rRNA. It has affinity for free ribosomal 30S subunits but not for 70S ribosomes. This is Ribosome maturation factor RimM from Bacillus cereus (strain ZK / E33L).